The following is a 147-amino-acid chain: Small ribosomal subunit protein uS12 (147 aa).

This sequence belongs to the universal ribosomal protein uS12 family. Part of the 30S ribosomal subunit.

Its function is as follows. With S4 and S5 plays an important role in translational accuracy. Located at the interface of the 30S and 50S subunits. This Methanococcus aeolicus (strain ATCC BAA-1280 / DSM 17508 / OCM 812 / Nankai-3) protein is Small ribosomal subunit protein uS12.